Reading from the N-terminus, the 1175-residue chain is MPLPFGLKLKRTRRYTVSSKSCLVARIQLLNNEFVEFTLSVESTGQESLEAVAQRLELREITYFSLWYYNKQNQRRWVDLEKPLKKQLDKHALEPTVYFGVVFYVPSVSQLQQEITRYQYYLQLKKDVLEGNLPCTLEQAIQLAGLAVQADFGDFDQYESQDFLQKFALLPVGWLQDEKLLEEAAQKVALLHQKYRGLTAPEAEMLYMQEVERMDGYGEESYPAKDSQGSDISIGACLDGIFVKHKNGRPPVVFRWHDIANMSHNKSFFALELANKEETIQFQTEDMETAKYVWRLCVARHKFYRLNQCNLQTQAATLNSVRRGSSSRMSLPKPQPYAMPPPPQLHYNGHYTEPFASSQDNVFVPNKNGFYCHSQTSLDRTQIDLSGRIRNGSVYSAHSTNSLNTPQPYLQPSPMSSNPSIPGSDVMRPDYIPSHRHSALIPPSYRPTPDYESVMKRLNRGMVHADRHSHSLRNLNIGSSYAYSRPDALVYSQPEIREHPHLASPQSAHYPFNLNYSFHSQAPYPYPVERRPVVGAVSVPELTNVQLQAQDYPAPNIMRTQVYRPPPPYPYPRPANSTPDLSRHLYISSSNPDLITRRVHHSVQTFQEDSLPVAHSLQEVSEPLTAARHAHLQKRNSIEIAGLTHGFEGLRLKEETMSASAADVAPRTFSAGSQSSVFSDKVKQEGTEEQGSGGYSHKKSLSDATMLIHSSEEDEDLEDDSSREHAVSEPRLTAAFSQEQQLNYPCASVTPVTGPLHIFEPKSHVTEPEKRAKDISPVHLVMETHQPRRHGLLTPSMSESDLTTSGRYRARRDSLKKRPVSDLLSGKKNTVEGLPPLGGMKKTRADAKKIGPLKLAALNGLSLSRLPLPDEGKEVSTRATNDERCKVLEQRLEQGTVFTEYERILKKRLVDGECSTARLPENAERNRFQDVLPYDDARVELVPTKENNTGYINASHIKVSVSGIEWDYIATQGPLQNTCQDFWQMVWEQGVAIIAMVTAEEEGGREKSFRYWPRLGSRHNTVTYGRFKITTRFRTDSGCYATTGLKMKHLLTGQERTVWHLQYTDWPEHGCPEDLKGFLSYLEEIQSVRRHTNSTSEPRSPNPPLLVHCSAGVGRTGVVILSEIMVACLEHNEVLDIPRVLELLRQQRMMLVQTLSQYTFVYRVLIQFLKSSRLI.

The FERM domain maps to 23–308; that stretch reads LVARIQLLNN…ARHKFYRLNQ (286 aa). Residues 395–421 show a composition bias toward polar residues; that stretch reads YSAHSTNSLNTPQPYLQPSPMSSNPSI. The segment at 395-445 is disordered; that stretch reads YSAHSTNSLNTPQPYLQPSPMSSNPSIPGSDVMRPDYIPSHRHSALIPPSY. Residues Ser-577, Ser-589, Ser-590, Ser-637, Ser-673, Ser-710, Ser-711, Ser-798, Ser-800, and Ser-805 each carry the phosphoserine modification. A disordered region spans residues 663–702; the sequence is DVAPRTFSAGSQSSVFSDKVKQEGTEEQGSGGYSHKKSLS. In terms of domain architecture, Tyrosine-protein phosphatase spans 897–1168; it reads VFTEYERILK…TFVYRVLIQF (272 aa). Substrate contacts are provided by residues Glu-1068, 1109-1115, and Gln-1153; that span reads CSAGVGR. The active-site Phosphocysteine intermediate is Cys-1109.

It belongs to the protein-tyrosine phosphatase family. Non-receptor class subfamily. In terms of tissue distribution, particularly abundantly in adrenal glands.

Its subcellular location is the cytoplasm. It localises to the cytoskeleton. The catalysed reaction is O-phospho-L-tyrosyl-[protein] + H2O = L-tyrosyl-[protein] + phosphate. The chain is Tyrosine-protein phosphatase non-receptor type 21 (Ptpn21) from Rattus norvegicus (Rat).